The following is a 1181-amino-acid chain: MRKKQKLPFDKLAIALMSTSILLNAQSDIKANTVTEDTPATEQAVETPQPTAVSEEAPSSKETKTPQTPDDAEETIADDANDLAPQAPAKTADTPATSKATIRDLNDPSQVKTLQEKAGKGAGTVVAVIDAGFDKNHEAWRLTDKTKARYQSKEDLEKAKKEHGITYGEWVNDKVAYYHDYSKDGKTAVDQEHGTHVSGILSGNAPSETKEPYRLEGAMPEAQLLLMRVEIVNGLADYARNYAQAIIDAVNLGAKVINMSFGNAALAYANLPDETKKAFDYAKSKGVSIVTSAGNDSSFGGKTRLPLADHPDYGVVGTPAAADSTLTVASYSPDKQLTETATVKTADQQDKEMPVLSTNRFEPNKAYDYAYANRGMKEDDFKDVKGKIALIERGDIDFKDKIANAKKAGAVGVLIYDNQDKGFPIELPNVDQMPAAFISRKDGLLLKENPQKTITFNATPKVLPTASGTKLSRFSSWGLTADGNIKPDIAAPGQDILSSVANNKYAKLSGTSMSAPLVAGIMGLLQKQYETQYPDMTPSERLDLAKKVLMSSATALYDEDEKAYFSPRQQGAGAVDAKKASAATMYVTDKDNTSSKVHLNNVSDKFEVTVTVHNKSDKPQELYYQATVQTDKVDGKLFALAPKALYETSWQKITIPANSSKQVTIPIDVSQFSKDLLAPMKNGYFLEGFVRFKQDPTKEELMSIPYIGFRGDFGNLSALEKPIYDSKDGSSYYHEANSDAKDQLDGDGLQFYALKNNFTALTTESNPWTIIKAVKEGVENIEDIESSEITETIFAGTFAKQDDDSHYYIHRHANGKPYAAISPNGDGNRDYVQFQGTFLRNAKNLVAEVLDKEGNVVWTSEVTEQVVKNYNNDLASTLGSTRFEKTRWDGKDKDGKVVANGTYTYRVRYTPISSGAKEQHTDFDVIVDNTTPEVATSATFSTEDRRLTLASKPKTSQPVYRERIAYTYMDEDLPTTEYISPNEDGTFTLPEEAETMEGATVPLKMSDFTYVVEDMAGNITYTPVTKLLEGHSNKPEQDGSDQAPDKKPETKPEQDGSGQAPDKKPETKPEQDGSGQTPDKKPETKPEQDGSGQTPDKKPETKPEKDSSGQTPGKTPQKGQPSRTLEKRSSKRALATKASTKDQLPTTNDKDTNRLHLLKLVMTTFFLGLVAHIFKTKRTED.

An N-terminal signal peptide occupies residues 1–31; that stretch reads MRKKQKLPFDKLAIALMSTSILLNAQSDIKA. A compositionally biased stretch (polar residues) spans 33 to 52; sequence TVTEDTPATEQAVETPQPTA. The interval 33 to 117 is disordered; it reads TVTEDTPATE…PSQVKTLQEK (85 aa). A compositionally biased stretch (acidic residues) spans 70–81; sequence DDAEETIADDAN. The 483-residue stretch at 99-581 folds into the Peptidase S8 domain; it reads KATIRDLNDP…AGAVDAKKAS (483 aa). Residues Asp-130, His-193, and Ser-512 each act as charge relay system in the active site. Basic and acidic residues-rich tracts occupy residues 1029 to 1054, 1061 to 1071, 1078 to 1088, and 1095 to 1107; these read EGHS…KPEQ, PDKKPETKPEQ, and PDKK…EKDS. The tract at residues 1029 to 1150 is disordered; that stretch reads EGHSNKPEQD…KDQLPTTNDK (122 aa). 5 repeat units span residues 1034 to 1050, 1051 to 1067, 1068 to 1084, 1085 to 1101, and 1102 to 1118. The 5 X 17 AA tandem repeats stretch occupies residues 1034–1118; sequence KPEQDGSDQA…GQTPGKTPQK (85 aa). Composition is skewed to polar residues over residues 1109–1123 and 1137–1147; these read GQTP…QPSR and KASTKDQLPTT. The LPXTG sorting signal motif lies at 1144–1148; sequence LPTTN. Residue Thr-1147 is modified to Pentaglycyl murein peptidoglycan amidated threonine. The propeptide at 1148–1181 is removed by sortase; that stretch reads NDKDTNRLHLLKLVMTTFFLGLVAHIFKTKRTED.

It belongs to the peptidase S8 family. Post-translationally, cleaved by SpeB protease; leading to its degradation. Degradation by SpeB is probably strictly regulated to preserve integrity of C5a peptidase.

It localises to the secreted. The protein resides in the cell wall. It carries out the reaction The primary cleavage site is at 67-His-|-Lys-68 in human C5a with a minor secondary cleavage site at 58-Ala-|-Ser-59.. Functionally, this virulence factor of S.pyogenes specifically cleaves the human serum chemotaxin C5a at '68-Lys-|-Asp-69' bond near its C-terminus, destroying its ability to serve as a chemoattractant. This is C5a peptidase (scpA) from Streptococcus pyogenes serotype M1.